A 401-amino-acid polypeptide reads, in one-letter code: Riboflavin biosynthesis protein RibBA (401 aa).

The segment at 1–203 (MTDFQFSKVE…IQQLQEYRRK (203 aa)) is DHBP synthase. D-ribulose 5-phosphate is bound by residues 30 to 31 (RE), Asp-35, 142 to 146 (RNGHT), and Glu-166. Glu-31 contacts Mg(2+). A Mg(2+)-binding site is contributed by His-145. Residues 204–401 (HDSLVKQISV…QIKMGHMFNF (198 aa)) form a GTP cyclohydrolase II region. 254-258 (RIHSE) lines the GTP pocket. 3 residues coordinate Zn(2+): Cys-259, Cys-270, and Cys-272. GTP is bound by residues Gln-275, 297 to 299 (EGR), and Thr-319. Asp-331 acts as the Proton acceptor; for GTP cyclohydrolase activity in catalysis. The active-site Nucleophile; for GTP cyclohydrolase activity is the Arg-333. GTP is bound by residues Thr-354 and Lys-359.

This sequence in the N-terminal section; belongs to the DHBP synthase family. In the C-terminal section; belongs to the GTP cyclohydrolase II family. Requires Mg(2+) as cofactor. It depends on Mn(2+) as a cofactor. The cofactor is Zn(2+).

It carries out the reaction D-ribulose 5-phosphate = (2S)-2-hydroxy-3-oxobutyl phosphate + formate + H(+). The catalysed reaction is GTP + 4 H2O = 2,5-diamino-6-hydroxy-4-(5-phosphoribosylamino)-pyrimidine + formate + 2 phosphate + 3 H(+). The protein operates within cofactor biosynthesis; riboflavin biosynthesis; 2-hydroxy-3-oxobutyl phosphate from D-ribulose 5-phosphate: step 1/1. It functions in the pathway cofactor biosynthesis; riboflavin biosynthesis; 5-amino-6-(D-ribitylamino)uracil from GTP: step 1/4. Its function is as follows. Catalyzes the conversion of D-ribulose 5-phosphate to formate and 3,4-dihydroxy-2-butanone 4-phosphate. Catalyzes the conversion of GTP to 2,5-diamino-6-ribosylamino-4(3H)-pyrimidinone 5'-phosphate (DARP), formate and pyrophosphate. This chain is Riboflavin biosynthesis protein RibBA, found in Actinobacillus pleuropneumoniae serotype 3 (strain JL03).